A 579-amino-acid polypeptide reads, in one-letter code: Transcription factor COE2 (579 aa).

The interaction with DNA stretch occupies residues 63-66; it reads RKSN. The C5-type zinc-finger motif lies at 149–168; it reads CRVLLTHEVMCSRCCEKKSC. Interaction with DNA stretches follow at residues 195 to 202 and 234 to 237; these read NCLKTAGN and NNSK. Residues 260–343 enclose the IPT/TIG domain; sequence PCIKAISPSE…KGAPGRFIYT (84 aa). 3 disordered regions span residues 442–482, 514–533, and 549–579; these read GVSI…YGSN, AIMPSSPPGSSSSSSLLPFS, and LRPQGFPHHPSAKTSGGTSFRAMTGLVVPPM. Over residues 449-459 the composition is skewed to polar residues; it reads GQTSGQGYTRN. Composition is skewed to low complexity over residues 460–472 and 521–533; these read SSSLSPRGYPSSS and PGSSSSSSLLPFS.

This sequence belongs to the COE family.

The protein localises to the nucleus. In Danio rerio (Zebrafish), this protein is Transcription factor COE2 (coe2).